Reading from the N-terminus, the 1231-residue chain is Multifunctional 2-oxoglutarate metabolism enzyme (1231 aa).

The 2-oxoglutarate dehydrogenase E1, N-terminal part stretch occupies residues 1-41 (MANISSPFGQNEWLVEAMYRKFRDDPSSVDPSWHEFLVDYS). The span at 24-37 (DDPSSVDPSWHEFL) shows a compositional bias: basic and acidic residues. The tract at residues 24–56 (DDPSSVDPSWHEFLVDYSPEPTSQPAAEPTRVT) is disordered. Residues 42 to 88 (PEPTSQPAAEPTRVTSPLVAERAAAAAPQAPPKPADTAAAGNGVVAA) form a linker region. Residues 89–337 (LAAKTAVPPP…LRTIHELLLS (249 aa)) are succinyltransferase E2. The active-site Proton acceptor; for succinyltransferase activity is histidine 316. Residues 338 to 1231 (DGFWDEVFRE…QQEILDEAFG (894 aa)) are 2-oxoglutarate dehydrogenase E1, C-terminal part. Residue arginine 542 participates in thiamine diphosphate binding. Residues histidine 581 and serine 606 each coordinate 2-oxoglutarate. Serine 606, leucine 608, aspartate 649, alanine 650, alanine 651, and asparagine 682 together coordinate thiamine diphosphate. Aspartate 649 serves as a coordination point for Mg(2+). Residues asparagine 682 and isoleucine 684 each contribute to the Mg(2+) site. Residues 787 to 817 (DISMKEAEDALRDYQGQLERVFNEVRELEKH) adopt a coiled-coil conformation. Histidine 1024 is a 2-oxoglutarate binding site. Residues threonine 1042, arginine 1058, lysine 1093, serine 1096, glutamine 1146, arginine 1153, and arginine 1154 each coordinate acetyl-CoA.

The protein belongs to the 2-oxoacid dehydrogenase family. Kgd subfamily. Homodimer. The 2-oxoglutarate dehydrogenase (ODH) complex contains multiple copies of three enzymatic components: 2-oxoglutarate dehydrogenase (E1), dihydrolipoamide succinyltransferase (E2) and lipoamide dehydrogenase (E3). Mg(2+) serves as cofactor. Requires thiamine diphosphate as cofactor.

The enzyme catalyses glyoxylate + 2-oxoglutarate + H(+) = 2-hydroxy-3-oxoadipate + CO2. It carries out the reaction 2-oxoglutarate + H(+) = succinate semialdehyde + CO2. It catalyses the reaction N(6)-[(R)-lipoyl]-L-lysyl-[protein] + 2-oxoglutarate + H(+) = N(6)-[(R)-S(8)-succinyldihydrolipoyl]-L-lysyl-[protein] + CO2. The catalysed reaction is N(6)-[(R)-dihydrolipoyl]-L-lysyl-[protein] + succinyl-CoA = N(6)-[(R)-S(8)-succinyldihydrolipoyl]-L-lysyl-[protein] + CoA. The protein operates within carbohydrate metabolism; tricarboxylic acid cycle; succinate from 2-oxoglutarate (transferase route): step 1/2. Its pathway is carbohydrate metabolism; tricarboxylic acid cycle; succinyl-CoA from 2-oxoglutarate (dehydrogenase route): step 1/1. Its activity is regulated as follows. Alpha-ketoglutarate dehydrogenase and decarboxylase activities are inhibited by unphosphorylated GarA, and allosterically activated by acetyl-CoA, the main substrate of the TCA cycle. Shows three enzymatic activities that share a first common step, the attack of thiamine-PP on 2-oxoglutarate (alpha-ketoglutarate, KG), leading to the formation of an enamine-thiamine-PP intermediate upon decarboxylation. Thus, displays KGD activity, catalyzing the decarboxylation from five-carbon 2-oxoglutarate to four-carbon succinate semialdehyde (SSA). Also catalyzes C-C bond formation between the activated aldehyde formed after decarboxylation of alpha-ketoglutarate and the carbonyl of glyoxylate (GLX), to yield 2-hydroxy-3-oxoadipate (HOA), which spontaneously decarboxylates to form 5-hydroxylevulinate (HLA). And is also a component of the 2-oxoglutarate dehydrogenase (ODH) complex, that catalyzes the overall conversion of 2-oxoglutarate to succinyl-CoA and CO(2). The KG decarboxylase and KG dehydrogenase reactions provide two alternative, tightly regulated, pathways connecting the oxidative and reductive branches of the TCA cycle. This is Multifunctional 2-oxoglutarate metabolism enzyme (kgd) from Mycobacterium bovis (strain ATCC BAA-935 / AF2122/97).